The sequence spans 273 residues: Putative phosphoenolpyruvate synthase regulatory protein (273 aa).

153-160 (GVSRSGKT) is an ADP binding site.

The protein belongs to the pyruvate, phosphate/water dikinase regulatory protein family. PSRP subfamily.

It carries out the reaction [pyruvate, water dikinase] + ADP = [pyruvate, water dikinase]-phosphate + AMP + H(+). The enzyme catalyses [pyruvate, water dikinase]-phosphate + phosphate + H(+) = [pyruvate, water dikinase] + diphosphate. Functionally, bifunctional serine/threonine kinase and phosphorylase involved in the regulation of the phosphoenolpyruvate synthase (PEPS) by catalyzing its phosphorylation/dephosphorylation. The chain is Putative phosphoenolpyruvate synthase regulatory protein from Albidiferax ferrireducens (strain ATCC BAA-621 / DSM 15236 / T118) (Rhodoferax ferrireducens).